Here is a 500-residue protein sequence, read N- to C-terminus: Histidine ammonia-lyase (500 aa).

Positions 142 to 144 (ASG) form a cross-link, 5-imidazolinone (Ala-Gly). 2,3-didehydroalanine (Ser) is present on serine 143.

The protein belongs to the PAL/histidase family. Post-translationally, contains an active site 4-methylidene-imidazol-5-one (MIO), which is formed autocatalytically by cyclization and dehydration of residues Ala-Ser-Gly.

It is found in the cytoplasm. It catalyses the reaction L-histidine = trans-urocanate + NH4(+). The protein operates within amino-acid degradation; L-histidine degradation into L-glutamate; N-formimidoyl-L-glutamate from L-histidine: step 1/3. This chain is Histidine ammonia-lyase, found in Macrococcus caseolyticus (strain JCSC5402) (Macrococcoides caseolyticum).